The chain runs to 559 residues: Protein pp71 (559 aa).

Cys-218 is subject to S-nitrosocysteine; by host. Thr-223 is modified (phosphothreonine). 2 disordered regions span residues 404–440 and 530–559; these read EFLP…TPLS and SSTL…RPRI. The segment covering 415–430 has biased composition (acidic residues); it reads TEEEEEEEEEDDEDDL. 2 stretches are compositionally biased toward low complexity: residues 431-440 and 543-559; these read SSTPTPTPLS and PIST…RPRI.

This sequence belongs to the herpesviridae pp71 family. As to quaternary structure, interacts with the host protein DAXX; this interaction takes place at ND10 and induces the reversal of DAXX-mediated repression of viral transcription. Interacts with UL35. Interacts with host TMEM173/STING1; this interaction inhibits the cGAS/STING pathway. Interacts with host RB1; this interaction mediates RB1 proteasomal degradation. In terms of processing, S-nitrosylation limits ability to undermine the cGAS/STING antiviral pathway.

Its subcellular location is the virion tegument. It is found in the host nucleus. It localises to the host endoplasmic reticulum. Functionally, stimulates viral immediate-early (IE) transcription. Plays a role in the inhibition of the host innate repsonse by targeting STING1 and thus the cGAS-STING pathway. Also counteracts host DAXX-mediated repression of viral transcription. Displaces a DAXX-binding protein, ATRX, from nuclear domain 10 sites (ND10) shortly after infection. Increases the basal level of SUMOylated DAXX in infected cells. Stimulates quiescent cells to re-enter the cell cycle, proceed through G1 and enter the S phase. Interacts with hypophosphorylated forms of RB1 and induces their degradation by the proteasome without involving ubiquitin conjugation. The protein is Protein pp71 (UL82) of Homo sapiens (Human).